Reading from the N-terminus, the 596-residue chain is Arginine--tRNA ligase (596 aa).

Residues 123-133 (PNTNKPLHLGH) carry the 'HIGH' region motif.

This sequence belongs to the class-I aminoacyl-tRNA synthetase family. Monomer.

It localises to the cytoplasm. It carries out the reaction tRNA(Arg) + L-arginine + ATP = L-arginyl-tRNA(Arg) + AMP + diphosphate. The protein is Arginine--tRNA ligase of Amoebophilus asiaticus (strain 5a2).